Reading from the N-terminus, the 51-residue chain is Proteinase inhibitor PTI (51 aa).

4 cysteine pairs are disulfide-bonded: Cys3-Cys40, Cys6-Cys24, Cys7-Cys36, and Cys13-Cys49.

The protein belongs to the protease inhibitor I20 (potato type II proteinase inhibitor) family.

It localises to the secreted. The sequence is that of Proteinase inhibitor PTI from Solanum tuberosum (Potato).